The following is a 424-amino-acid chain: Histidinol dehydrogenase (424 aa).

Residues Y121, Q183, and N206 each contribute to the NAD(+) site. Substrate-binding residues include S229, Q251, and H254. 2 residues coordinate Zn(2+): Q251 and H254. Residues E319 and H320 each act as proton acceptor in the active site. Residues H320, D353, E407, and H412 each coordinate substrate. D353 contacts Zn(2+). H412 provides a ligand contact to Zn(2+).

The protein belongs to the histidinol dehydrogenase family. Zn(2+) is required as a cofactor.

The enzyme catalyses L-histidinol + 2 NAD(+) + H2O = L-histidine + 2 NADH + 3 H(+). Its pathway is amino-acid biosynthesis; L-histidine biosynthesis; L-histidine from 5-phospho-alpha-D-ribose 1-diphosphate: step 9/9. Catalyzes the sequential NAD-dependent oxidations of L-histidinol to L-histidinaldehyde and then to L-histidine. This chain is Histidinol dehydrogenase, found in Geobacillus kaustophilus (strain HTA426).